The chain runs to 718 residues: Potassium channel KAT1 (718 aa).

Topologically, residues 1 to 60 (MTQAHSKSCFHQFWDGLQIKRSSDSFTVELLPSLGATINHSNKLQKFIISPYDPRYRSWE) are cytoplasmic. A helical transmembrane segment spans residues 61–81 (LFLIVLVVYSAWICPFELAFL). Residues 82–88 (RDLPSKL) lie on the Extracellular side of the membrane. A helical transmembrane segment spans residues 89–109 (LLVENIVDIFFAIDIVLTFFV). Residues 110–132 (AYVDSKTHLLVDDRKRIAMRYLS) lie on the Cytoplasmic side of the membrane. The helical transmembrane segment at 133–153 (TWFIFDVCSTAPFQPIILLFT) threads the bilayer. Over 154 to 162 (HKGNDIAFK) the chain is Extracellular. The chain crosses the membrane as a helical; Voltage-sensor span at residues 163 to 183 (VLNLLRLWRLHRVSSLFARLE). Topologically, residues 184–197 (KDIRFNYFWTRCSK) are cytoplasmic. The helical transmembrane segment at 198–218 (LISVTLFAVHCAGCFNYMIAD) threads the bilayer. The Extracellular segment spans residues 219–245 (RYPNPEKTWIGAVMSTFRSESLWTRYI). An intramembrane region (pore-forming) is located at residues 246–265 (TALYWSITTLTTTGYGDLHA). Residues 266–269 (ENPT) lie on the Extracellular side of the membrane. The helical transmembrane segment at 270–290 (EMLFDIVYMMFNLGLTAYLIG) threads the bilayer. Residues 291-718 (NMTNLVVHGT…DGDHLFLLEM (428 aa)) lie on the Cytoplasmic side of the membrane. 374–493 (LFNGVSGNFI…NILMNNLVQK (120 aa)) is a binding site for a nucleoside 3',5'-cyclic phosphate. Residues 560–584 (EATRSSASENENSSMTDKEENHDEV) are disordered. A compositionally biased stretch (polar residues) spans 562 to 574 (TRSSASENENSSM). Basic and acidic residues predominate over residues 575-584 (TDKEENHDEV). The KHA domain occupies 647–718 (RVTIHKYRHN…DGDHLFLLEM (72 aa)).

Belongs to the potassium channel family. Plant (TC 1.A.1.4) subfamily.

It is found in the membrane. Its function is as follows. Probable inward-rectifying potassium channel. Assuming opened or closed conformations in response to the voltage difference across the membrane, the channel is activated by hyperpolarization. This Oryza sativa subsp. japonica (Rice) protein is Potassium channel KAT1.